The sequence spans 447 residues: Cysteine--tRNA ligase (447 aa).

Cys28 is a Zn(2+) binding site. Residues 30–40 carry the 'HIGH' region motif; that stretch reads PTVYNYIHVGN. 3 residues coordinate Zn(2+): Cys211, His236, and Glu240. The 'KMSKS' region signature appears at 268-272; it reads KMSKS. Lys271 serves as a coordination point for ATP.

Belongs to the class-I aminoacyl-tRNA synthetase family. Monomer. Zn(2+) serves as cofactor.

It localises to the cytoplasm. It catalyses the reaction tRNA(Cys) + L-cysteine + ATP = L-cysteinyl-tRNA(Cys) + AMP + diphosphate. This Streptococcus pneumoniae serotype 4 (strain ATCC BAA-334 / TIGR4) protein is Cysteine--tRNA ligase.